A 194-amino-acid polypeptide reads, in one-letter code: Fibroblast growth factor 7 (194 aa).

The N-terminal stretch at 1-31 (MRKWILTWILPSLLYRSCFHIICLVGTISLA) is a signal peptide. The N-linked (GlcNAc...) asparagine glycan is linked to Asn-45.

It belongs to the heparin-binding growth factors family. In terms of assembly, interacts with FGFBP1. Interacts with FGFR2. Affinity between fibroblast growth factors (FGFs) and their receptors is increased by heparan sulfate glycosaminoglycans that function as coreceptors.

Plays an important role in the regulation of embryonic development, cell proliferation and cell differentiation. Required for normal branching morphogenesis. Growth factor active on keratinocytes. Possible major paracrine effector of normal epithelial cell proliferation. The chain is Fibroblast growth factor 7 (FGF7) from Ovis aries (Sheep).